Consider the following 601-residue polypeptide: Glutathione-regulated potassium-efflux system protein KefB (601 aa).

13 helical membrane-spanning segments follow: residues 4–24 (ADLL…VPLA), 29–49 (IGAV…GLGF), 55–75 (EILH…GLEL), 87–107 (IFGV…GLLM), 111–131 (FLWQ…TAMA), 152–172 (VLLF…LLAG), 177–197 (HFDW…LIGG), 207–227 (FIAA…LVLS), 230–250 (LFMD…GVLL), 262–282 (AIDP…GMSL), 284–304 (LGVL…LVVI), 324–344 (MQFA…FSTA), and 356–376 (ALLL…MKGI). The RCK N-terminal domain occupies 400–519 (KPQVIVVGFG…AGVTQFSRET (120 aa)).

The protein belongs to the monovalent cation:proton antiporter 2 (CPA2) transporter (TC 2.A.37) family. KefB subfamily. In terms of assembly, interacts with the regulatory subunit KefG.

It is found in the cell inner membrane. Pore-forming subunit of a potassium efflux system that confers protection against electrophiles. Catalyzes K(+)/H(+) antiport. The sequence is that of Glutathione-regulated potassium-efflux system protein KefB from Salmonella paratyphi A (strain ATCC 9150 / SARB42).